The sequence spans 149 residues: Small ribosomal subunit protein uS9 (149 aa).

This sequence belongs to the universal ribosomal protein uS9 family.

The protein resides in the cytoplasm. The sequence is that of Small ribosomal subunit protein uS9 (RPS16A) from Oryza sativa subsp. indica (Rice).